Here is a 613-residue protein sequence, read N- to C-terminus: Phostensin (613 aa).

Over residues 18 to 33 the composition is skewed to basic and acidic residues; it reads EEASVRGREKAERERL. Disordered regions lie at residues 18–231 and 266–500; these read EEAS…SAYQ and GEER…AVPG. Phosphoserine occurs at positions 54, 125, 133, 175, and 195. 2 stretches are compositionally biased toward basic and acidic residues: residues 104–154 and 167–191; these read RSEE…ERRL and LEAR…EAWK. T199 is modified (phosphothreonine). Basic and acidic residues predominate over residues 199–221; the sequence is TPERSLRLAESREQSPRRKEVES. Position 224 is a phosphoserine (S224). Residues 266–282 are compositionally biased toward basic and acidic residues; it reads GEERQDYSEECGRKEEW. Positions 295-309 are enriched in polar residues; the sequence is LSETLTREAQGNSSA. 3 stretches are compositionally biased toward basic and acidic residues: residues 314 to 327, 340 to 350, and 357 to 366; these read AEQR…RGMK, KAREWTPRDIE, and EPPESAEKLL. S368 and S432 each carry phosphoserine. Residues 424–446 are compositionally biased toward pro residues; that stretch reads QPPPPAPLSPPPPAPTAPQPPGD. N6-acetyllysine is present on K457. A compositionally biased stretch (low complexity) spans 476 to 499; the sequence is PRRSVPPATPATPTSPATVDAAVP. S490 and S530 each carry phosphoserine. The segment at 552–595 is disordered; the sequence is QYPSESSVLEELGPEPEVPSAPNPPAAQPDDEEDEEELLLLQPE. Residues 567-578 are compositionally biased toward pro residues; sequence PEVPSAPNPPAA. Over residues 580–589 the composition is skewed to acidic residues; sequence PDDEEDEEEL.

In terms of assembly, interacts with Protein phosphatase 1 (PP1). Isoform 4 is predominantly expressed in leukocytes and spleen.

The protein localises to the cytoplasm. The protein resides in the cytoskeleton. Its function is as follows. May target protein phosphatase 1 to F-actin cytoskeleton. The chain is Phostensin (PPP1R18) from Homo sapiens (Human).